The primary structure comprises 163 residues: Neurotrophin-3 (163 aa).

Positions Ile1–Ser3 are cleaved as a signal peptide. Residues Thr4–Arg119 constitute a propeptide that is removed on maturation. Asn112 carries N-linked (GlcNAc...) asparagine glycosylation. The segment at Thr114–Ser133 is disordered. Basic and acidic residues predominate over residues Ser123–Ser133.

It belongs to the NGF-beta family.

The protein resides in the secreted. Functionally, seems to promote the survival of visceral and proprioceptive sensory neurons. In Lichanura trivirgata (Rosy boa), this protein is Neurotrophin-3 (NTF3).